We begin with the raw amino-acid sequence, 677 residues long: Methionine--tRNA ligase (677 aa).

Positions 15–25 (PYANGSIHLGH) match the 'HIGH' region motif. 4 residues coordinate Zn(2+): Cys-146, Cys-149, Cys-159, and Cys-162. A 'KMSKS' region motif is present at residues 333-337 (KMSKS). Position 336 (Lys-336) interacts with ATP. The tRNA-binding domain maps to 575 to 677 (DFAKIDLRVA…DGAKPGQQVK (103 aa)).

This sequence belongs to the class-I aminoacyl-tRNA synthetase family. MetG type 1 subfamily. As to quaternary structure, homodimer. The cofactor is Zn(2+).

It localises to the cytoplasm. The catalysed reaction is tRNA(Met) + L-methionine + ATP = L-methionyl-tRNA(Met) + AMP + diphosphate. Its function is as follows. Is required not only for elongation of protein synthesis but also for the initiation of all mRNA translation through initiator tRNA(fMet) aminoacylation. The protein is Methionine--tRNA ligase of Salmonella paratyphi A (strain AKU_12601).